A 983-amino-acid chain; its full sequence is Type IV secretion system protein CagE (983 aa).

597-604 contacts ATP; that stretch reads GSTGSGKT.

The protein belongs to the TrbE/VirB4 family. As to quaternary structure, component of the Cag type IV secretion system, which is composed of a wheel-shaped outer membrane complex (OMC) and an inner membrane complex (IMC). Interacts with CagV and CagBeta.

The protein localises to the cell inner membrane. It catalyses the reaction ATP + H2O + cellular proteinSide 1 = ADP + phosphate + cellular proteinSide 2.. ATPase component of the type IV secretion system Cag (Cag-T4SS). Acts as a molecular motor to provide the energy that is required for the export of proteins. Required for CagA translocation and induction of IL-8 in host gastric epithelial cells. Plays a key role in Cag-T4SS pilus biogenesis, especially in the localization and stabilization of the pilus-associated components CagI, CagL and the surface protein CagH. Is also critical for assembly of the entire cytoplasmic portion of the Cag inner membrane complex (IMC). The chain is Type IV secretion system protein CagE from Helicobacter pylori (strain ATCC 700392 / 26695) (Campylobacter pylori).